Reading from the N-terminus, the 844-residue chain is MFTHLTRAFRKMNNLVNRSFIDVHRVVAELSYPEFEEDVKNPESSIYRTPISLFQNKDIVTIVGDYILSPKTDSFQVLYPIKKVIEHFPVIFHCTHNNAPLWVHLLDERHHRLLQSLLTYEIVNAKYRGIVVIPYYRRPINYQTGKSLLMSKLASVKVLDILMRCGSYKFISLMCMINKKNNTNFLHCCASKWGEVGSKMMLHIAEMFFANPTTSQHLSDASSFPDAAAEDDKGKTPAHLAIQEDNADALLFLISLYGAPWFQDNNSYMKSALELKSNKCVKVLSFAADKYEILPNINNNQLEPDTMCGVCATSVEEDENEGKTTSLSWYQMNCKHYIHCECLMGMCAAAGNVQCPMCREDVGDEVLERCPPTIFRWLKLAERSEHNRVLFEAKKQEFYKQMEAMKPPRVVVPPRRTFLTPARRGERAIRIAREIATNAIAEATAQGDVNSYFPVLIDGSGEEYEEEGEEFFNSEEEALAFGRPFLEDEEEARQIQMRQFAELSRRGVSVNIINNDNPHRHISTVNIVQPVYGVEKSPAASFIYNMLKNDVFESIRSRDTRVGGERVPVMNLSNDKRALFHAASSMLCDFATETNSQIVGLDFQAVYDPHHISNYIETFGSPLHAYPGAVTFLDGAQDYYAESIRYDNDIVSFSEMASELHITEALDVFEGSLLSPLFKKIRTGKSYSNWNDHLRRRNYARDIAEEFVRVCENSLASREHPPVHVHPFRDGAIPILIEYIVDFIHHCITWSMQVNALHCMRKYIEHENTNVHLLNLRPTDERVEVLRVSQLRWSRLFNEQYNTRMSLSTKRLSLMKIFNHDLGVSKFGVYKLLDIIEMYCFTLI.

Residue 229–236 (AEDDKGKT) coordinates ATP. The RING-type; atypical zinc-finger motif lies at 308–359 (CGVCATSVEEDENEGKTTSLSWYQMNCKHYIHCECLMGMCAAAGNVQCPMCR).

In terms of assembly, interacts with host UBE2E1/UBCH6; this interaction results in WSV222 auto-ubiquitination. Interacts with host tumor suppressor-like protein.

It carries out the reaction S-ubiquitinyl-[E2 ubiquitin-conjugating enzyme]-L-cysteine + [acceptor protein]-L-lysine = [E2 ubiquitin-conjugating enzyme]-L-cysteine + N(6)-ubiquitinyl-[acceptor protein]-L-lysine.. The protein operates within protein modification; protein ubiquitination. Its function is as follows. Probable E3 ubiquitin-protein ligase which accepts ubiquitin from the E2 ubiquitin-conjugating enzyme UBE2E1/UBCH6 in the form of a thioester and then directly transfers the ubiquitin to targeted substrates. Mediates ubiquitination of host tumor-suppressor-like protein (TSL) targeting it for degradation. Might function as an anti-apoptosis protein by counteracting TSL-induced apoptosis. The sequence is that of RING finger containing E3 ubiquitin-protein ligase WSV222 from White spot syndrome virus (isolate Shrimp/China/Tongan/1996) (WSSV).